Here is a 375-residue protein sequence, read N- to C-terminus: Alanine racemase (375 aa).

K38 acts as the Proton acceptor; specific for D-alanine in catalysis. K38 carries the N6-(pyridoxal phosphate)lysine modification. R137 serves as a coordination point for substrate. Y266 (proton acceptor; specific for L-alanine) is an active-site residue. M314 contributes to the substrate binding site.

This sequence belongs to the alanine racemase family. Requires pyridoxal 5'-phosphate as cofactor.

It catalyses the reaction L-alanine = D-alanine. It functions in the pathway amino-acid biosynthesis; D-alanine biosynthesis; D-alanine from L-alanine: step 1/1. Its function is as follows. Catalyzes the interconversion of L-alanine and D-alanine. May also act on other amino acids. The protein is Alanine racemase (alr) of Cutibacterium acnes (strain DSM 16379 / KPA171202) (Propionibacterium acnes).